A 377-amino-acid chain; its full sequence is Alanine racemase (377 aa).

The active-site Proton acceptor; specific for D-alanine is Lys-37. Lys-37 is modified (N6-(pyridoxal phosphate)lysine). Arg-135 is a binding site for substrate. The active-site Proton acceptor; specific for L-alanine is Tyr-271. Met-319 contacts substrate.

Belongs to the alanine racemase family. Pyridoxal 5'-phosphate is required as a cofactor.

It carries out the reaction L-alanine = D-alanine. It functions in the pathway amino-acid biosynthesis; D-alanine biosynthesis; D-alanine from L-alanine: step 1/1. Functionally, catalyzes the interconversion of L-alanine and D-alanine. May also act on other amino acids. This chain is Alanine racemase (alr), found in Helicobacter pylori (strain G27).